The chain runs to 600 residues: UvrABC system protein C (600 aa).

The 78-residue stretch at glutamate 15–valine 92 folds into the GIY-YIG domain. The 36-residue stretch at glutamine 197–threonine 232 folds into the UVR domain.

It belongs to the UvrC family. Interacts with UvrB in an incision complex.

It localises to the cytoplasm. Functionally, the UvrABC repair system catalyzes the recognition and processing of DNA lesions. UvrC both incises the 5' and 3' sides of the lesion. The N-terminal half is responsible for the 3' incision and the C-terminal half is responsible for the 5' incision. The polypeptide is UvrABC system protein C (Lactobacillus delbrueckii subsp. bulgaricus (strain ATCC BAA-365 / Lb-18)).